A 195-amino-acid chain; its full sequence is GRF1-interacting factor 2 (195 aa).

Residues 166-195 form a disordered region; that stretch reads QQPETGLGGNVGLRGGKQDGADGQGKDDGK. A compositionally biased stretch (gly residues) spans 171–180; the sequence is GLGGNVGLRG. Over residues 181–195 the composition is skewed to basic and acidic residues; the sequence is GKQDGADGQGKDDGK.

Belongs to the SS18 family. As to quaternary structure, interacts with GRF1. As to expression, predominantly expressed in shoot tips containing the shoot apical meristem (SAM) and flower buds. Also expressed in mature flowers.

Transcription coactivator that plays a role in the regulation of cell expansion in leaf and cotyledons tissues. Component of a network formed by miR396, the GRFs and their interacting factors (GIFs) acting in the regulation of meristem function, at least partially through the control of cell proliferation. GIFs are involved in the positive regulation of cell proliferation of lateral organs in a functionally redundant manner. In Arabidopsis thaliana (Mouse-ear cress), this protein is GRF1-interacting factor 2 (GIF2).